The primary structure comprises 741 residues: Catalase-peroxidase (741 aa).

The first 21 residues, 1-21 (MRNFRRFTIALLVLFLGPIGA), serve as a signal peptide directing secretion. A cross-link (tryptophyl-tyrosyl-methioninium (Trp-Tyr) (with M-257)) is located at residues 109–231 (WHSAGTYRIS…LAAVQMGLIY (123 aa)). His110 serves as the catalytic Proton acceptor. The tryptophyl-tyrosyl-methioninium (Tyr-Met) (with W-109) cross-link spans 231–257 (YVNPEGPNGNPDPLAAAKDIRETFGRM). His272 contributes to the heme b binding site.

This sequence belongs to the peroxidase family. Peroxidase/catalase subfamily. In terms of assembly, homodimer or homotetramer. The cofactor is heme b. In terms of processing, formation of the three residue Trp-Tyr-Met cross-link is important for the catalase, but not the peroxidase activity of the enzyme.

It catalyses the reaction H2O2 + AH2 = A + 2 H2O. It carries out the reaction 2 H2O2 = O2 + 2 H2O. In terms of biological role, bifunctional enzyme with both catalase and broad-spectrum peroxidase activity. This Leptospira biflexa serovar Patoc (strain Patoc 1 / Ames) protein is Catalase-peroxidase.